The chain runs to 75 residues: Translational regulator CsrA (75 aa).

The protein belongs to the CsrA/RsmA family. In terms of assembly, homodimer; the beta-strands of each monomer intercalate to form a hydrophobic core, while the alpha-helices form wings that extend away from the core.

It is found in the cytoplasm. Its function is as follows. A translational regulator that binds mRNA to regulate translation initiation and/or mRNA stability. Usually binds in the 5'-UTR at or near the Shine-Dalgarno sequence preventing ribosome-binding, thus repressing translation. Its main target seems to be the major flagellin gene, while its function is anatagonized by FliW. The protein is Translational regulator CsrA of Acetivibrio thermocellus (strain ATCC 27405 / DSM 1237 / JCM 9322 / NBRC 103400 / NCIMB 10682 / NRRL B-4536 / VPI 7372) (Clostridium thermocellum).